A 141-amino-acid polypeptide reads, in one-letter code: Hemoglobin subunit alpha (141 aa).

In terms of domain architecture, Globin spans 1–141 (VLSSADKTNI…VSTVLTSKYR (141 aa)). A Phosphoserine modification is found at serine 3. Lysine 7 bears the N6-succinyllysine mark. Threonine 8 is subject to Phosphothreonine. Lysine 11 carries the N6-succinyllysine modification. At lysine 16 the chain carries N6-acetyllysine; alternate. An N6-succinyllysine; alternate modification is found at lysine 16. Tyrosine 24 carries the post-translational modification Phosphotyrosine. Serine 35 carries the phosphoserine modification. Residue lysine 40 is modified to N6-succinyllysine. Serine 49 is modified (phosphoserine). Residue histidine 58 coordinates O2. Residue histidine 87 participates in heme b binding. The residue at position 102 (serine 102) is a Phosphoserine. Residue threonine 108 is modified to Phosphothreonine. A phosphoserine mark is found at serine 124 and serine 131. Threonine 134 and threonine 137 each carry phosphothreonine. Serine 138 is subject to Phosphoserine.

Belongs to the globin family. In terms of assembly, heterotetramer of two alpha chains and two beta chains. As to expression, red blood cells.

In terms of biological role, involved in oxygen transport from the lung to the various peripheral tissues. Its function is as follows. Hemopressin acts as an antagonist peptide of the cannabinoid receptor CNR1. Hemopressin-binding efficiently blocks cannabinoid receptor CNR1 and subsequent signaling. In Rousettus aegyptiacus (Egyptian fruit bat), this protein is Hemoglobin subunit alpha (HBA).